The sequence spans 274 residues: Large ribosomal subunit protein uL2cz/uL2cy (274 aa).

Disordered regions lie at residues 1–25 (MAIHLYKTSTPSTRNGAVDSQVKSN) and 223–274 (MNPV…RRTK).

It belongs to the universal ribosomal protein uL2 family. As to quaternary structure, part of the 50S ribosomal subunit.

Its subcellular location is the plastid. It localises to the chloroplast. The sequence is that of Large ribosomal subunit protein uL2cz/uL2cy (rpl2-A) from Citrus sinensis (Sweet orange).